We begin with the raw amino-acid sequence, 967 residues long: RNA polymerase II C-terminal domain phosphatase-like 1 (967 aa).

The short motif at 38 to 41 (RKKK) is the Nuclear localization signal (NLS) element. The region spanning 151–401 (LNLRCLGIVF…TPVLCVARNV (251 aa)) is the FCP1 homology domain. Disordered stretches follow at residues 548–611 (SEPS…VQSR) and 643–712 (MEKH…RNSD). The span at 590–603 (PSEPSFPQRPPVQA) shows a compositional bias: pro residues. Basic and acidic residues predominate over residues 665–684 (RMLHENRRPPKESLRRDEQL). DRBM domains lie at 724-792 (TETS…NLAD) and 855-925 (GSIT…SVRS). The segment at 928-967 (GQPLHKRQGSPRSFGGMSNKRLKPDFQRSLQRMPSSGRYS) is disordered. The interval 945 to 967 (SNKRLKPDFQRSLQRMPSSGRYS) is required for nuclear localization (NLS). The short motif at 947–951 (KRLKP) is the Nuclear localization signal (NLS) element. Polar residues predominate over residues 955-967 (RSLQRMPSSGRYS).

In terms of assembly, interacts with FREE1, ANAC019, MYB3, MYB4 and MYB32. Binds to DMS3. Interacts with RCF3. Interacts with RS40 and RS41. Interacts with EIF4A3. Interacts with UPF3. It depends on Mg(2+) as a cofactor. Requires Co(2+) as cofactor. The cofactor is Mn(2+). Expressed at very low levels in roots, leaves, stems, flowers and siliques.

It is found in the nucleus. Its subcellular location is the nucleus speckle. The enzyme catalyses O-phospho-L-seryl-[protein] + H2O = L-seryl-[protein] + phosphate. It catalyses the reaction O-phospho-L-threonyl-[protein] + H2O = L-threonyl-[protein] + phosphate. Its function is as follows. Processively dephosphorylates 'Ser-5' but not 'Ser-2' of the heptad repeats YSPTSPS in the C-terminal domain of the largest RNA polymerase II subunit (RPB1). This promotes the activity of RNA polymerase II. Together with CPL2, required for male gametes fertility. Multifunctional regulator that modulates plant growth, stress, and phytohormones responses. Negative regulator of stress gene transcription involved in abscisic acid (ABA) mediated and jasmonic acid (JA) mediated signaling pathways, NaCl, osmotic stress, wounding, and cold resistance. Negatively regulates the expression of jasmonic acid (JA) biosynthetic genes in response to wounding. Forms a complex with RCF3 that modulates co-transcriptional processes such as mRNA capping and polyadenylation, and functions to repress stress-inducible gene expression. Dephosphorylates RCF3. Involved in the dephosphorylation of EIF4A3. This dephosphorylation retains EIF4A3 in the nucleus and limits its accumulation in the cytoplasm. Is essential for the degradation of the nonsense-mediated mRNA decay (NMD) transcripts. The chain is RNA polymerase II C-terminal domain phosphatase-like 1 from Arabidopsis thaliana (Mouse-ear cress).